Consider the following 396-residue polypeptide: Stearoyl-[acyl-carrier-protein] 9-desaturase 2, chloroplastic (396 aa).

The transit peptide at 1–32 (MALRPNDVTLRLTPPLAAAARRNRRAAAGGVR) directs the protein to the chloroplast. Residues E138, E176, H179, E229, E262, and H265 each contribute to the Fe cation site.

Belongs to the fatty acid desaturase type 2 family. In terms of assembly, homodimer. Fe(2+) is required as a cofactor.

It is found in the plastid. It localises to the chloroplast. It carries out the reaction octadecanoyl-[ACP] + 2 reduced [2Fe-2S]-[ferredoxin] + O2 + 2 H(+) = (9Z)-octadecenoyl-[ACP] + 2 oxidized [2Fe-2S]-[ferredoxin] + 2 H2O. It participates in lipid metabolism; fatty acid metabolism. Functionally, converts stearoyl-ACP to oleoyl-ACP by introduction of a cis double bond between carbons 9 and 10 of the acyl chain. Required for the repression of the salicylic acid (SA) signaling pathway. The protein is Stearoyl-[acyl-carrier-protein] 9-desaturase 2, chloroplastic (SSI2) of Oryza sativa subsp. indica (Rice).